Here is a 195-residue protein sequence, read N- to C-terminus: Pyruvoyl-dependent arginine decarboxylase AaxB (195 aa).

Serine 53 is modified (pyruvic acid (Ser)).

Belongs to the pyruvoyl-dependent arginine decarboxylase family. In terms of assembly, trimer of an alpha-beta dimer. Pyruvate serves as cofactor.

The protein localises to the cytoplasm. The catalysed reaction is L-arginine + H(+) = agmatine + CO2. Its activity is regulated as follows. Inhibited by argininamide. Functionally, part of the AaxABC system, catalyzes the decarboxylation of L-arginine. The arginine uptake by the bacterium in the macrophage may be a virulence factor against the host innate immune response. In Chlamydia pneumoniae (Chlamydophila pneumoniae), this protein is Pyruvoyl-dependent arginine decarboxylase AaxB (aaxB).